The following is a 175-amino-acid chain: uncharacterized protein (175 aa).

This is an uncharacterized protein from Acanthamoeba polyphaga (Amoeba).